A 336-amino-acid chain; its full sequence is Histidinol-phosphate aminotransferase (336 aa).

Lysine 204 carries the post-translational modification N6-(pyridoxal phosphate)lysine.

The protein belongs to the class-II pyridoxal-phosphate-dependent aminotransferase family. Histidinol-phosphate aminotransferase subfamily. It depends on pyridoxal 5'-phosphate as a cofactor.

It carries out the reaction L-histidinol phosphate + 2-oxoglutarate = 3-(imidazol-4-yl)-2-oxopropyl phosphate + L-glutamate. It participates in amino-acid biosynthesis; L-histidine biosynthesis; L-histidine from 5-phospho-alpha-D-ribose 1-diphosphate: step 7/9. This Thermococcus kodakarensis (strain ATCC BAA-918 / JCM 12380 / KOD1) (Pyrococcus kodakaraensis (strain KOD1)) protein is Histidinol-phosphate aminotransferase.